Reading from the N-terminus, the 413-residue chain is Putative glutamate synthase [NADPH] small chain (413 aa).

Residues cysteine 33, cysteine 37, cysteine 43, and cysteine 47 each contribute to the [4Fe-4S] cluster site.

As to quaternary structure, aggregate of 4 catalytic active heterodimers, consisting of a large and a small subunit. [4Fe-4S] cluster is required as a cofactor.

The catalysed reaction is 2 L-glutamate + NADP(+) = L-glutamine + 2-oxoglutarate + NADPH + H(+). It functions in the pathway amino-acid biosynthesis; L-glutamate biosynthesis via GLT pathway; L-glutamate from 2-oxoglutarate and L-glutamine (NADP(+) route): step 1/1. It participates in energy metabolism; nitrogen metabolism. In Cereibacter sphaeroides (Rhodobacter sphaeroides), this protein is Putative glutamate synthase [NADPH] small chain (gltD).